The sequence spans 288 residues: Elongation factor Ts (288 aa).

The interval 80–83 (TDFL) is involved in Mg(2+) ion dislocation from EF-Tu.

The protein belongs to the EF-Ts family.

It is found in the cytoplasm. Its function is as follows. Associates with the EF-Tu.GDP complex and induces the exchange of GDP to GTP. It remains bound to the aminoacyl-tRNA.EF-Tu.GTP complex up to the GTP hydrolysis stage on the ribosome. This is Elongation factor Ts from Pseudomonas fluorescens (strain ATCC BAA-477 / NRRL B-23932 / Pf-5).